Here is a 223-residue protein sequence, read N- to C-terminus: Cytidylate kinase (223 aa).

10–18 is a binding site for ATP; that stretch reads GPASSGKST.

Belongs to the cytidylate kinase family. Type 1 subfamily.

The protein resides in the cytoplasm. It carries out the reaction CMP + ATP = CDP + ADP. It catalyses the reaction dCMP + ATP = dCDP + ADP. The chain is Cytidylate kinase from Streptococcus pneumoniae (strain 70585).